We begin with the raw amino-acid sequence, 556 residues long: Dihydroxy-acid dehydratase (556 aa).

A Mg(2+)-binding site is contributed by Asp78. Cys119 is a binding site for [2Fe-2S] cluster. Mg(2+)-binding residues include Asp120 and Lys121. Lys121 carries the N6-carboxylysine modification. Residue Cys191 coordinates [2Fe-2S] cluster. Glu442 is a Mg(2+) binding site. Ser468 (proton acceptor) is an active-site residue.

Belongs to the IlvD/Edd family. In terms of assembly, homodimer. It depends on [2Fe-2S] cluster as a cofactor. The cofactor is Mg(2+).

The catalysed reaction is (2R)-2,3-dihydroxy-3-methylbutanoate = 3-methyl-2-oxobutanoate + H2O. It catalyses the reaction (2R,3R)-2,3-dihydroxy-3-methylpentanoate = (S)-3-methyl-2-oxopentanoate + H2O. It functions in the pathway amino-acid biosynthesis; L-isoleucine biosynthesis; L-isoleucine from 2-oxobutanoate: step 3/4. The protein operates within amino-acid biosynthesis; L-valine biosynthesis; L-valine from pyruvate: step 3/4. Functionally, functions in the biosynthesis of branched-chain amino acids. Catalyzes the dehydration of (2R,3R)-2,3-dihydroxy-3-methylpentanoate (2,3-dihydroxy-3-methylvalerate) into 2-oxo-3-methylpentanoate (2-oxo-3-methylvalerate) and of (2R)-2,3-dihydroxy-3-methylbutanoate (2,3-dihydroxyisovalerate) into 2-oxo-3-methylbutanoate (2-oxoisovalerate), the penultimate precursor to L-isoleucine and L-valine, respectively. The polypeptide is Dihydroxy-acid dehydratase (Caldanaerobacter subterraneus subsp. tengcongensis (strain DSM 15242 / JCM 11007 / NBRC 100824 / MB4) (Thermoanaerobacter tengcongensis)).